The following is an 83-amino-acid chain: Small ribosomal subunit protein bS18 (83 aa).

It belongs to the bacterial ribosomal protein bS18 family. Part of the 30S ribosomal subunit. Forms a tight heterodimer with protein bS6.

In terms of biological role, binds as a heterodimer with protein bS6 to the central domain of the 16S rRNA, where it helps stabilize the platform of the 30S subunit. This chain is Small ribosomal subunit protein bS18, found in Methylobacterium sp. (strain 4-46).